The chain runs to 488 residues: Cobyric acid synthase (488 aa).

Residues Val-248–Ala-441 form the GATase cobBQ-type domain. Catalysis depends on Cys-328, which acts as the Nucleophile. His-433 is an active-site residue.

It belongs to the CobB/CobQ family. CobQ subfamily.

The protein operates within cofactor biosynthesis; adenosylcobalamin biosynthesis. Catalyzes amidations at positions B, D, E, and G on adenosylcobyrinic A,C-diamide. NH(2) groups are provided by glutamine, and one molecule of ATP is hydrogenolyzed for each amidation. This Burkholderia ambifaria (strain ATCC BAA-244 / DSM 16087 / CCUG 44356 / LMG 19182 / AMMD) (Burkholderia cepacia (strain AMMD)) protein is Cobyric acid synthase.